The primary structure comprises 110 residues: uncharacterized protein (110 aa).

Residues 38–62 (SVQQNARAEEAEAAAPPAEEDSLPD) form a disordered region.

This is an uncharacterized protein from Mus musculus (Mouse).